A 210-amino-acid chain; its full sequence is uncharacterized protein (210 aa).

The next 6 membrane-spanning stretches (helical) occupy residues 9–29 (WVVTGLFVLTAAECGLAIIAK), 35–55 (LIVNHGLHFAMAVAMAVMAWP), 64–84 (GPAVFFLLAAVWFGATAVVAV), 91–111 (GLYGYHGLMMLATAWMYAAMN), 149–169 (IWFSAVNWIGTVGFAVAAVFW), and 190–210 (IGQAMMAAGMAMLFFAMLFPV).

Its subcellular location is the cell membrane. This is an uncharacterized protein from Mycobacterium bovis (strain ATCC BAA-935 / AF2122/97).